Consider the following 864-residue polypeptide: Translation initiation factor IF-2 (864 aa).

Basic and acidic residues predominate over residues 140–171 (DSRSLNTKKENKLKISNKDEQNKKFNQHRESN). The interval 140–179 (DSRSLNTKKENKLKISNKDEQNKKFNQHRESNSFDLNHKK) is disordered. The 170-residue stretch at 364 to 533 (IRAPVVTIMG…LLQAEMLELK (170 aa)) folds into the tr-type G domain. A G1 region spans residues 373-380 (GHVDHGKT). 373–380 (GHVDHGKT) contacts GTP. Positions 398-402 (GITQN) are G2. The G3 stretch occupies residues 419-422 (DTPG). GTP is bound by residues 419–423 (DTPGH) and 473–476 (NKID). Positions 473-476 (NKID) are G4. The interval 509-511 (SAK) is G5.

It belongs to the TRAFAC class translation factor GTPase superfamily. Classic translation factor GTPase family. IF-2 subfamily.

The protein resides in the cytoplasm. One of the essential components for the initiation of protein synthesis. Protects formylmethionyl-tRNA from spontaneous hydrolysis and promotes its binding to the 30S ribosomal subunits. Also involved in the hydrolysis of GTP during the formation of the 70S ribosomal complex. The chain is Translation initiation factor IF-2 from Buchnera aphidicola subsp. Acyrthosiphon pisum (strain Tuc7).